A 201-amino-acid polypeptide reads, in one-letter code: Potassium-transporting ATPase KdpC subunit (201 aa).

A helical membrane pass occupies residues 7–29 (PALVLLTALTAITGLAYPLAMTG).

It belongs to the KdpC family. As to quaternary structure, the system is composed of three essential subunits: KdpA, KdpB and KdpC.

Its subcellular location is the cell inner membrane. In terms of biological role, part of the high-affinity ATP-driven potassium transport (or Kdp) system, which catalyzes the hydrolysis of ATP coupled with the electrogenic transport of potassium into the cytoplasm. This subunit acts as a catalytic chaperone that increases the ATP-binding affinity of the ATP-hydrolyzing subunit KdpB by the formation of a transient KdpB/KdpC/ATP ternary complex. This Methylobacterium radiotolerans (strain ATCC 27329 / DSM 1819 / JCM 2831 / NBRC 15690 / NCIMB 10815 / 0-1) protein is Potassium-transporting ATPase KdpC subunit.